The chain runs to 311 residues: Phosphoribosylaminoimidazole-succinocarboxamide synthase (311 aa).

This sequence belongs to the SAICAR synthetase family.

It catalyses the reaction 5-amino-1-(5-phospho-D-ribosyl)imidazole-4-carboxylate + L-aspartate + ATP = (2S)-2-[5-amino-1-(5-phospho-beta-D-ribosyl)imidazole-4-carboxamido]succinate + ADP + phosphate + 2 H(+). It functions in the pathway purine metabolism; IMP biosynthesis via de novo pathway; 5-amino-1-(5-phospho-D-ribosyl)imidazole-4-carboxamide from 5-amino-1-(5-phospho-D-ribosyl)imidazole-4-carboxylate: step 1/2. The protein is Phosphoribosylaminoimidazole-succinocarboxamide synthase of Aromatoleum aromaticum (strain DSM 19018 / LMG 30748 / EbN1) (Azoarcus sp. (strain EbN1)).